Consider the following 295-residue polypeptide: WHI2-like protein P4H10.16c (295 aa).

It belongs to the WHI2 family.

It is found in the cytoplasm. It localises to the nucleus. In Schizosaccharomyces pombe (strain 972 / ATCC 24843) (Fission yeast), this protein is WHI2-like protein P4H10.16c.